The primary structure comprises 67 residues: Small ribosomal subunit protein eS17 (67 aa).

The protein belongs to the eukaryotic ribosomal protein eS17 family.

This is Small ribosomal subunit protein eS17 from Thermococcus onnurineus (strain NA1).